A 547-amino-acid chain; its full sequence is ATP synthase subunit alpha (547 aa).

Position 173–180 (173–180 (GDRATGKT)) interacts with ATP. Residues 526 to 547 (PEAEALADEDVEQEQIVRQKRG) form a disordered region. A compositionally biased stretch (acidic residues) spans 528–538 (AEALADEDVEQ).

Belongs to the ATPase alpha/beta chains family. In terms of assembly, F-type ATPases have 2 components, CF(1) - the catalytic core - and CF(0) - the membrane proton channel. CF(1) has five subunits: alpha(3), beta(3), gamma(1), delta(1), epsilon(1). CF(0) has three main subunits: a(1), b(2) and c(9-12). The alpha and beta chains form an alternating ring which encloses part of the gamma chain. CF(1) is attached to CF(0) by a central stalk formed by the gamma and epsilon chains, while a peripheral stalk is formed by the delta and b chains.

It is found in the cell membrane. It carries out the reaction ATP + H2O + 4 H(+)(in) = ADP + phosphate + 5 H(+)(out). Produces ATP from ADP in the presence of a proton gradient across the membrane. The alpha chain is a regulatory subunit. The chain is ATP synthase subunit alpha from Nocardioides sp. (strain ATCC BAA-499 / JS614).